Here is a 333-residue protein sequence, read N- to C-terminus: C4-dicarboxylate-binding periplasmic protein DctP (333 aa).

Residues 1–26 (MLTRRILGALVGATALSLALSVPALA) form the signal peptide.

This sequence belongs to the bacterial solute-binding protein 7 family. In terms of assembly, the complex comprises the extracytoplasmic solute receptor protein DctP, and the two transmembrane proteins DctQ and DctM.

It is found in the periplasm. Part of the tripartite ATP-independent periplasmic (TRAP) transport system DctPQM involved in C4-dicarboxylates uptake. Binds C4-dicarboxylates such as fumarate, succinate, L-malate and D-malate. This chain is C4-dicarboxylate-binding periplasmic protein DctP, found in Rhodobacter capsulatus (Rhodopseudomonas capsulata).